Reading from the N-terminus, the 145-residue chain is Peptide methionine sulfoxide reductase MsrB (145 aa).

The region spanning 6-129 (KNERLKQLTD…NSAALRFIPV (124 aa)) is the MsrB domain. Residue cysteine 118 is the Nucleophile of the active site.

It belongs to the MsrB Met sulfoxide reductase family.

The catalysed reaction is L-methionyl-[protein] + [thioredoxin]-disulfide + H2O = L-methionyl-(R)-S-oxide-[protein] + [thioredoxin]-dithiol. The polypeptide is Peptide methionine sulfoxide reductase MsrB (Listeria welshimeri serovar 6b (strain ATCC 35897 / DSM 20650 / CCUG 15529 / CIP 8149 / NCTC 11857 / SLCC 5334 / V8)).